Reading from the N-terminus, the 728-residue chain is Catalase B (728 aa).

An N-terminal signal peptide occupies residues 1–15; it reads MRLTFIPSLIGVANA. Positions 16–27 are excised as a propeptide; sequence VCPYMTGELNRR. H102 is an active-site residue. N-linked (GlcNAc...) asparagine glycosylation is present at N120. The active site involves N175. Residue Y389 participates in heme binding. N-linked (GlcNAc...) asparagine glycans are attached at residues N448 and N551.

The protein belongs to the catalase family. In terms of assembly, homotetramer. Heme serves as cofactor. In terms of processing, N-glycosylated.

Its subcellular location is the secreted. The enzyme catalyses 2 H2O2 = O2 + 2 H2O. Functionally, occurs in almost all aerobically respiring organisms and serves to protect cells from the toxic effects of hydrogen peroxide. The chain is Catalase B (catB) from Aspergillus fumigatus (strain ATCC MYA-4609 / CBS 101355 / FGSC A1100 / Af293) (Neosartorya fumigata).